Consider the following 170-residue polypeptide: UPF0220 protein C8D2.02c (170 aa).

Helical transmembrane passes span 23–43 (LGVYFAGIMFASAVWVFVDAA), 54–74 (LHITFIDWIPFLCSILGIVIV), 101–121 (ILFIGFALLAGGLGGSFTVFI), and 136–156 (MGSANIISNILFMISATALWI).

The protein belongs to the UPF0220 family.

The protein resides in the membrane. This is UPF0220 protein C8D2.02c from Schizosaccharomyces pombe (strain 972 / ATCC 24843) (Fission yeast).